The following is a 2731-amino-acid chain: Teneurin-1 (2731 aa).

A disordered region spans residues 1-72; that stretch reads MEQTDCKPYQ…KRKDVEKSTQ (72 aa). Positions 1 to 318 constitute a Teneurin N-terminal domain; it reads MEQTDCKPYQ…KPYRCCNWKC (318 aa). The Cytoplasmic segment spans residues 1–324; sequence MEQTDCKPYQ…NWKCTALSAT (324 aa). Basic and acidic residues predominate over residues 44–55; sequence ETLHEYNQELRR. The short motif at 62 to 65 is the Nuclear localization signal (NLS) element; sequence RKRK. S105 bears the Phosphoserine mark. A Phosphothreonine modification is found at T109. S116 is modified (phosphoserine). The tract at residues 175–241 is disordered; sequence DSAQDMQSSP…PAPPTSTQDS (67 aa). Residues 178 to 189 show a composition bias toward polar residues; it reads QDMQSSPHNQFT. Positions 192-201 are enriched in pro residues; that stretch reads PLPPPPPPPH. Positions 214 to 224 are enriched in polar residues; the sequence is DSLQRRSMTTR. The Required for interaction with SORBS1 (Ten-1 ICD form) signature appears at 290–297; it reads PPPRPLPR. Residues 325 to 345 form a helical membrane-spanning segment; it reads AITVTLALLLAYVIAVHLFGL. Over 346–2731 the chain is Extracellular; sequence TWQLQPVGQI…FMRQSEIGRR (2386 aa). N-linked (GlcNAc...) asparagine glycosylation is present at N432. 8 EGF-like domains span residues 527-558, 559-590, 591-623, 624-656, 657-690, 691-720, 721-752, and 760-795; these read IMDD…PDCA, RDSC…ECDV, PEEQ…EICE, EEDC…NCET, PLPI…SDCS, TELC…GPTC, EERS…DHCT, and VRDG…TGCN. Cystine bridges form between C531–C541, C535–C546, C548–C557, C566–C577, C579–C588, C595–C606, C600–C611, C613–C622, C627–C638, C632–C643, C645–C654, C665–C678, C680–C689, C694–C704, C698–C709, C711–C720, C725–C735, C729–C740, C742–C751, C764–C774, C768–C783, and C785–C794. Residues N904 and N1083 are each glycosylated (N-linked (GlcNAc...) asparagine). NHL repeat units follow at residues 1193 to 1218, 1298 to 1342, 1357 to 1408, 1420 to 1464, and 1487 to 1530; these read LFAP…VRRI, SHCG…NAVI, LSCD…IAGR, FLVS…VTTN, and CFSG…ISKN. Residues 1540–1559 form a YD 1 repeat; the sequence is YEIASPADQELYQFTVNGTH. 2 N-linked (GlcNAc...) asparagine glycosylation sites follow: N1556 and N1573. 4 YD repeats span residues 1576–1596, 1614–1638, 1639–1660, and 1661–1681; these read YNAE…VHIR, YWLT…ALMT, YPGN…TVYE, and YDPE…SSFH. N-linked (GlcNAc...) asparagine glycans are attached at residues N1669, N1705, N1743, N1763, N1787, and N1848. YD repeat units lie at residues 1851-1870, 1871-1891, 1892-1910, 1911-1931, 1939-1955, 1956-1975, 1976-1995, 1998-2018, 2021-2041, 2091-2111, and 2119-2139; these read YSPS…EKME, YDQS…WSYT, YLEK…YIFE, YDQS…HSLQ, YRNI…FIQD, YSRD…RRVL, YKYT…TQVT, YEES…FICT, YRQT…EGLV, YDLN…FNAN, and YEIL…MGRM. N-linked (GlcNAc...) asparagine glycosylation is present at N2151. YD repeat units follow at residues 2159–2179, 2180–2200, 2202–2222, 2234–2254, and 2256–2276; these read YDAD…WRYS, YDLN…LTPL, YDLR…DEDG, YNSN…TVQY, and YDGL…LQFF. N2291 carries N-linked (GlcNAc...) asparagine glycosylation. YD repeat units lie at residues 2302 to 2319 and 2320 to 2343; these read YDLQ…GEEY and YVAC…IKEI. S2586 carries the phosphoserine modification. An N-linked (GlcNAc...) asparagine glycan is attached at N2608.

It belongs to the tenascin family. Teneurin subfamily. As to quaternary structure, homodimer; disulfide-linked. Heterodimer with either TENM2 or TENM3. May also form heterodimer with TENM4. Ten-1 ICD interacts with SORBS1 (via third SH3 domain). Interacts with MBD1 isoform 2. Ten-1 ICD interacts with HINT1. Once secreted, may also be cleaved to give rise to the TCAP-1 form. In terms of processing, derives from the plasma membrane form by proteolytic processing. Further proteolytic cleavage may generate 11.9 and 4.7 kDa bioactive peptides. Isoform 1 and isoform 2 are expressed in the brain. Isoform 2 is expressed in the granular layer of the dentate gyrus and the pyramidal layer (Py) of the CA1, CA2 and CA3 of the hippocampus (at protein level). Expressed in the cortex, thalamus, CA1, CA2, CA3, dentate gyrus and granular layer of the hippocampus. Weakly expressed in kidney, testis and lung.

Its subcellular location is the cell membrane. The protein resides in the cytoplasm. It localises to the secreted. It is found in the nucleus. The protein localises to the nucleus speckle. Its subcellular location is the nucleus matrix. The protein resides in the cytoskeleton. Its function is as follows. Involved in neural development, regulating the establishment of proper connectivity within the nervous system. May function as a cellular signal transducer. Plays a role in the regulation of neuroplasticity in the limbic system. Mediates a rapid reorganization of actin- and tubulin-based cytoskeleton elements with an increase in dendritic arborization and spine density formation of neurons in the hippocampus and amygdala. Induces BDNF transcription inhibition in neurons. Activates the mitogen-activated protein (MAP) kinase 2 (MEK2) and extracellular signal-regulated kinase (ERK) cascade. Also acts as a bioactive neuroprotective peptide on limbic neurons of the brain and regulates stress-induced behavior: attenuates alkalosis-associated necrotic cell death and the effects of corticotropin-releasing factor (CRF) on c-fos/FOS induction and on the reinstatement of cocaine seeking. Functionally, induces gene transcription activation. The sequence is that of Teneurin-1 (Tenm1) from Mus musculus (Mouse).